Consider the following 331-residue polypeptide: MNFLQVAQEVIDGKIISNEEALAILNSKDDELLQLMDGAFAIRRHYYGKKVKLNMIMNAKSGYCPEDCGYCSQSSKSTAPIEKYPFITKEEILAGAKRAFDNKIGTYCIVASGRGPTRKDVNVVSEAVVEIKEKYGLKVCACLGLLKEEQAQQLKEAGVDRYNHNLNTSERHHSFITTSHTYEDRVNTVEIVKKHGISPCSGAIIGMKETKEDVVNIARALHQLDADSIPVNFLNAIDGTKLEGTKDLNPRYCLKVLALFRYINPTKEIRISGGREINLGCLQPLGLYAANSIFVGDYLTTAGQEANSDYRMLEDLGFEIELTQKQEAAFC.

In terms of domain architecture, Radical SAM core spans 46–275 (YYGKKVKLNM…TKEIRISGGR (230 aa)). Cys64, Cys68, and Cys71 together coordinate [4Fe-4S] cluster. [2Fe-2S] cluster contacts are provided by Cys108, Cys140, Cys200, and Arg270.

Belongs to the radical SAM superfamily. Biotin synthase family. In terms of assembly, homodimer. The cofactor is [4Fe-4S] cluster. [2Fe-2S] cluster is required as a cofactor.

The catalysed reaction is (4R,5S)-dethiobiotin + (sulfur carrier)-SH + 2 reduced [2Fe-2S]-[ferredoxin] + 2 S-adenosyl-L-methionine = (sulfur carrier)-H + biotin + 2 5'-deoxyadenosine + 2 L-methionine + 2 oxidized [2Fe-2S]-[ferredoxin]. It functions in the pathway cofactor biosynthesis; biotin biosynthesis; biotin from 7,8-diaminononanoate: step 2/2. Its function is as follows. Catalyzes the conversion of dethiobiotin (DTB) to biotin by the insertion of a sulfur atom into dethiobiotin via a radical-based mechanism. The polypeptide is Biotin synthase (Lysinibacillus sphaericus (strain C3-41)).